A 570-amino-acid polypeptide reads, in one-letter code: Urease subunit alpha (570 aa).

A Urease domain is found at 131–570 (GGFDAHIHFI…LPMAQRYFLF (440 aa)). Ni(2+)-binding residues include H136, H138, and K219. K219 bears the N6-carboxylysine mark. H221 contacts substrate. H248 and H274 together coordinate Ni(2+). Catalysis depends on H322, which acts as the Proton donor. D362 contacts Ni(2+).

This sequence belongs to the metallo-dependent hydrolases superfamily. Urease alpha subunit family. As to quaternary structure, heterotrimer of UreA (gamma), UreB (beta) and UreC (alpha) subunits. Three heterotrimers associate to form the active enzyme. Ni cation is required as a cofactor. Carboxylation allows a single lysine to coordinate two nickel ions.

It is found in the cytoplasm. It catalyses the reaction urea + 2 H2O + H(+) = hydrogencarbonate + 2 NH4(+). The protein operates within nitrogen metabolism; urea degradation; CO(2) and NH(3) from urea (urease route): step 1/1. This Chelativorans sp. (strain BNC1) protein is Urease subunit alpha.